The following is a 598-amino-acid chain: MAFPGVRRGLGELIGLRKSDAWYSTEDPRFGLTCRITASTRKLASCTSPWQYADIIQFIASTTITTIMLESLIEQWQIMRQAFAPMRLSRWQLVKLLAAQIHRDNPVAAKIAALLFVAGLFWAVSVLTRPKRLDKKLGLPLIGGSRTLKKDFATVIERGRQMYPDQPFIVNSSGKPFVVYPPSNFDEIKRLSEEEASAQDFFYDATHGYWTSVGTETPALWKTIGIDLARAGAPVVSTKQKDARTAFDRYVGYCPDEKSFNVFDVMMKVVALTNGASFVGREVAGGRWHELVAQLPMTVYFAVIFLTWTPRLFRPFLEPLFFLPHFKVQRDMRRILEPIIKQDLDEWSKTDDKKEQLKVKEGQRLPYHKWLISRYGPGEATPRQLATDQIVTAFESTISTALTIYYILFQLASRPELQDELRQEIADNTTDGQLPSTSLTELRKMDSVMRESFRVNPFALFSLYRITRKPLQLSTGPKLPAGTIFCVDVHHINNSSALFPAPTRYDPHRFLNKREQPGAEHRHQFVSTGPMDPNFGDGTQACPGRFWANNTIKVCLVHVLTRYRLKLKEGHTRPQPVCMPNGSWVPDLKAEVIFQSLD.

The helical transmembrane segment at 107 to 127 threads the bilayer; that stretch reads VAAKIAALLFVAGLFWAVSVL. Residues Asn171, Asn428, and Asn494 are each glycosylated (N-linked (GlcNAc...) asparagine). Cys542 is a binding site for heme. Residues Asn549 and Asn581 are each glycosylated (N-linked (GlcNAc...) asparagine).

It belongs to the cytochrome P450 family. It depends on heme as a cofactor.

The protein resides in the membrane. It participates in mycotoxin biosynthesis. Cytochrome P450 monooxygenase; part of the gene cluster that mediates the biosynthesis of the mycotoxins phomacins, leucine-derived cytochalasans with potent actin polymerization-inhibitory activities and monocot-specific antigerminative activities. The first step in the pathway is catalyzed by the hybrid PKS-NRPS phmA, assisted by the enoyl reductase phmE, that are responsible for fusion of the leucine precursor and the polyketide backbone to produce a 2-pyrrolidone intermediate. The polyketide synthase module (PKS) of phmA is responsible for the synthesis of the polyketide backbone and the downstream nonribosomal peptide synthetase (NRPS) amidates the carboxyl end of the polyketide with the leucine precursor. Because phmA lacks a designated enoylreductase (ER) domain, the required activity is provided the enoyl reductase phmE. Reduction by the hydrolyase phmG, followed by dehydration and intra-molecular Diels-Alder cyclization by the Diels-Alderase phmD then yield the required isoindolone-fused macrocycle. A number of oxidative steps catalyzed by the tailoring cytochrome P450 monooxygenase phmB, the FAD-linked oxidoreductase phmC and the short-chain dehydrogenase/reductase phmF, are further required to afford the final products, phomacin D and phomacin E. In Phaeosphaeria nodorum (strain SN15 / ATCC MYA-4574 / FGSC 10173) (Glume blotch fungus), this protein is Cytochrome P450 monooxygenase phmB.